The chain runs to 115 residues: U3-lycotoxin-Ls1j (115 aa).

The signal sequence occupies residues Met-1 to Ala-20. The propeptide occupies Glu-21–Arg-44. Cystine bridges form between Cys-48–Cys-63, Cys-55–Cys-72, Cys-62–Cys-87, and Cys-74–Cys-85.

Belongs to the neurotoxin 19 (CSTX) family. 01 subfamily. Expressed by the venom gland.

It localises to the secreted. The sequence is that of U3-lycotoxin-Ls1j from Lycosa singoriensis (Wolf spider).